A 692-amino-acid chain; its full sequence is MSKIRIYEYAKQNNLASKDVINFLKTENVEVSNHMSAISDEVVKKLDNKFKAKPENAKKGQNQKQSNNQQQNRQKQNQKNQSKPNKNKKQKGPKKNQQQERPAAKPAETPGKITYHGTLTVQDLAGKLNKEPAELIKKLMFLGVMATKNQDIDDDAIELICGEYDVEVEKEIILEDTDLDKYIEEDAEENLQERPAVVTIMGHVDHGKTTLLDSIRHTKVTAGEAGGITQHIGAYQVENDGKKITFLDTPGHAAFTSMRSRGAQVTDIAILVVAADDGVMPQTVEAINHAKAAEVPIIVAVNKMDKEGANPDRVMQELTEHQLIPEDWGGNTIFVNLSAIKNEGIDDLLEMILLVSEVEELKANPNAKAFGSVIDAQLDKGRGSVATLLVQNGTLHVGDPLVVGSTFGKVRAMVNDLGNRVTEVGPSTPVEITGLHGVPQAGDQFLVFKDEKKARQIGEAREQKQIDENRGTQSTVSLDDLFEQIKQGEMKELNIIVKADVQGSVEALAASLQKIEVEGVNVKIIHTGVGAITESDIILASASKAIVIGFNVRPDVNAKNAAESEKVDLRLHRVIYNAIEEIESAMKGLLDPEYQEKVIGQAEVREIFKVSRIGTIAGSYVTDGKITRDAGVRLIRDGVVLYEGELQALKRFKDDVKEVQTNYECGITISNFNDIKEGDTIEAFVMEEIERK.

Residues 51-114 (KAKPENAKKG…KPAETPGKIT (64 aa)) are disordered. Residues 59–84 (KGQNQKQSNNQQQNRQKQNQKNQSKP) are compositionally biased toward low complexity. A compositionally biased stretch (basic residues) spans 85–94 (NKNKKQKGPK). One can recognise a tr-type G domain in the interval 193-362 (ERPAVVTIMG…LLVSEVEELK (170 aa)). The tract at residues 202–209 (GHVDHGKT) is G1. Residue 202 to 209 (GHVDHGKT) coordinates GTP. A G2 region spans residues 227–231 (GITQH). The segment at 248 to 251 (DTPG) is G3. Residues 248 to 252 (DTPGH) and 302 to 305 (NKMD) each bind GTP. Residues 302-305 (NKMD) are G4. The segment at 338–340 (SAI) is G5.

This sequence belongs to the TRAFAC class translation factor GTPase superfamily. Classic translation factor GTPase family. IF-2 subfamily.

It is found in the cytoplasm. One of the essential components for the initiation of protein synthesis. Protects formylmethionyl-tRNA from spontaneous hydrolysis and promotes its binding to the 30S ribosomal subunits. Also involved in the hydrolysis of GTP during the formation of the 70S ribosomal complex. This is Translation initiation factor IF-2 from Oceanobacillus iheyensis (strain DSM 14371 / CIP 107618 / JCM 11309 / KCTC 3954 / HTE831).